The following is a 709-amino-acid chain: Frizzled-6 (709 aa).

The signal sequence occupies residues 1-18 (MERSPFLLACILLPLVRG). The 114-residue stretch at 19–132 (HSLFTCEPIT…CNRLPHCDDT (114 aa)) folds into the FZ domain. Topologically, residues 19 to 201 (HSLFTCEPIT…SDELDFAKSF (183 aa)) are extracellular. 5 disulfide bridges follow: C24/C85, C32/C78, C69/C106, C95/C129, and C99/C123. N38 carries an N-linked (GlcNAc...) asparagine glycan. Residues 202–222 (IGIVSIFCLCATLFTFLTFLI) form a helical membrane-spanning segment. The Cytoplasmic portion of the chain corresponds to 223–233 (DVRRFRYPERP). A helical transmembrane segment spans residues 234-254 (IIYYSVCYSIVSLMYFVGFLL). Residues 255-284 (GNSTACNKADEKLELGDTVVLGSKNKACSV) are Extracellular-facing. N256 carries an N-linked (GlcNAc...) asparagine glycan. A helical membrane pass occupies residues 285 to 305 (VFMFLYFFTMAGTVWWVILTI). At 306-324 (TWFLAAGRKWSCEAIEQKA) the chain is on the cytoplasmic side. The helical transmembrane segment at 325–345 (VWFHAVAWGAPGFLTVMLLAM) threads the bilayer. Topologically, residues 346–370 (NKVEGDNISGVCFVGLYDLDASRYF) are extracellular. Residue N352 is glycosylated (N-linked (GlcNAc...) asparagine). Residues 371–391 (VLLPLCLCVFVGLSLLLAGII) traverse the membrane as a helical segment. Over 392–416 (SLNHVRQVIQHDGRNQEKLKKFMIR) the chain is Cytoplasmic. The chain crosses the membrane as a helical span at residues 417–437 (IGVFSGLYLVPLVTLLGCYVY). Residues 438–473 (ELVNRITWEMTWFSDHCHQYRIPCPYQANPKARPEL) lie on the Extracellular side of the membrane. A helical transmembrane segment spans residues 474-494 (ALFMIKYLMTLIVGISAVFWV). The Cytoplasmic portion of the chain corresponds to 495-709 (GSKKTCTEWA…EQGAGSHSDA (215 aa)). A Lys-Thr-X-X-X-Trp motif, mediates interaction with the PDZ domain of Dvl family members motif is present at residues 498–503 (KTCTEW). The segment covering 583 to 594 (QETSTEVHTSPE) has biased composition (polar residues). The disordered stretch occupies residues 583 to 709 (QETSTEVHTS…EQGAGSHSDA (127 aa)). Residues 596-616 (SVKEGRADRANTPSAKDRDCG) show a composition bias toward basic and acidic residues. Residues 620-629 (GPSSKLSGNR) show a composition bias toward polar residues. Basic and acidic residues predominate over residues 630 to 644 (NGRESRAGGLKERSN). S656 carries the post-translational modification Phosphoserine. Residues 669–690 (CSTSQAASSPEPTSLKGSTSLP) show a composition bias toward polar residues. Residues 697–709 (ARKEQGAGSHSDA) are compositionally biased toward basic and acidic residues.

Belongs to the G-protein coupled receptor Fz/Smo family. In terms of assembly, interacts with LMBR1L. Post-translationally, ubiquitinated by ZNRF3, leading to its degradation by the proteasome. Expressed in both hair cells and supporting cells in the utricle, saccule, cristae and the organ of Corti in the inner ear (at protein level).

It is found in the membrane. Its subcellular location is the cell membrane. The protein resides in the cell surface. The protein localises to the apical cell membrane. It localises to the cytoplasmic vesicle membrane. It is found in the endoplasmic reticulum membrane. Functionally, receptor for Wnt proteins. Most of frizzled receptors are coupled to the beta-catenin canonical signaling pathway, which leads to the activation of disheveled proteins, inhibition of GSK-3 kinase, nuclear accumulation of beta-catenin and activation of Wnt target genes. A second signaling pathway involving PKC and calcium fluxes has been seen for some family members, but it is not yet clear if it represents a distinct pathway or if it can be integrated in the canonical pathway, as PKC seems to be required for Wnt-mediated inactivation of GSK-3 kinase. Both pathways seem to involve interactions with G-proteins. Activation by Wnt5A stimulates PKC activity via a G-protein-dependent mechanism. Involved in transduction and intercellular transmission of polarity information during tissue morphogenesis and/or in differentiated tissues. Together with FZD3, is involved in the neural tube closure and plays a role in the regulation of the establishment of planar cell polarity (PCP), particularly in the orientation of asymmetric bundles of stereocilia on the apical faces of a subset of auditory and vestibular sensory cells located in the inner ear. The sequence is that of Frizzled-6 (Fzd6) from Mus musculus (Mouse).